Consider the following 555-residue polypeptide: Tetracycline 7-halogenase (555 aa).

An FAD-binding site is contributed by 22–27; the sequence is GSGLSG.

This sequence belongs to the flavin-dependent halogenase family. Bacterial tryptophan halogenase subfamily. Homodimer.

The enzyme catalyses tetracycline + FADH2 + chloride + O2 = 7-chlorotetracycline + FAD + 2 H2O + H(+). It participates in antibiotic biosynthesis. Its function is as follows. Involved in the biosynthesis of chlorotetracycline (CTC), an important member from antibiotics tetracycline (TC) family, which inhibits protein synthesis in bacteria and is widely involved in clinical therapy, animal feeds and aquaculture. Utilizes FADH(2) supplied by the flavin reductase CtcQ, to catalyze the chlorination of tetracycline (TC) at C7 position, leading to the production of 7-chlorotetracycline. The enzyme forms a lysine chloramine intermediate on an internal lysine residue before transferring the chlorine to the substrate. It is stereo-selective for the 4S (natural) isomer of tetracycline. The protein is Tetracycline 7-halogenase of Kitasatospora aureofaciens (Streptomyces aureofaciens).